The sequence spans 289 residues: ATP phosphoribosyltransferase (289 aa).

Belongs to the ATP phosphoribosyltransferase family. Long subfamily. The cofactor is Mg(2+).

It localises to the cytoplasm. It carries out the reaction 1-(5-phospho-beta-D-ribosyl)-ATP + diphosphate = 5-phospho-alpha-D-ribose 1-diphosphate + ATP. Its pathway is amino-acid biosynthesis; L-histidine biosynthesis; L-histidine from 5-phospho-alpha-D-ribose 1-diphosphate: step 1/9. With respect to regulation, feedback inhibited by histidine. Its function is as follows. Catalyzes the condensation of ATP and 5-phosphoribose 1-diphosphate to form N'-(5'-phosphoribosyl)-ATP (PR-ATP). Has a crucial role in the pathway because the rate of histidine biosynthesis seems to be controlled primarily by regulation of HisG enzymatic activity. In Pelotomaculum thermopropionicum (strain DSM 13744 / JCM 10971 / SI), this protein is ATP phosphoribosyltransferase.